The primary structure comprises 296 residues: Galectin-3 (296 aa).

The span at 1–11 (MADSFSLNDAL) shows a compositional bias: polar residues. The tract at residues 1 to 150 (MADSFSLNDA…PSAPGAYPAA (150 aa)) is disordered. Residue Ala-2 is modified to N-acetylalanine. Ser-6 and Ser-12 each carry phosphoserine; by CK1. 2 stretches are compositionally biased toward low complexity: residues 12 to 31 (SGSGNPNPQGWPGPWGNQPA) and 38 to 47 (GASYPGAYPG). 8 tandem repeats follow at residues 36–44 (YPGASYPGA), 45–53 (YPGQAPPGG), 54–62 (YPGQAPPGG), 63–71 (YPGQAPPGG), 72–80 (YPGQAPPGG), 81–89 (YPGQAPPGG), 90–98 (YPGQAPPGG), and 99–107 (YPGQAPPGT). Residues 36–143 (YPGASYPGAY…AYPPPGQPSA (108 aa)) form a 12 X 9 AA tandem repeats of Y-P-G-X(3)-P-G-[GAT] region. Residues 48–120 (QAPPGGYPGQ…PTAPAYPGPT (73 aa)) are compositionally biased toward pro residues. One copy of the 9; approximate repeat lies at 108–115 (YPGPTAPA). Repeat 10 spans residues 116 to 124 (YPGPTAPGT). Residues 121 to 133 (APGTQPGQPSGPG) show a composition bias toward low complexity. An 11; approximate repeat occupies 125–134 (QPGQPSGPGA). A 12; approximate repeat occupies 135–143 (YPPPGQPSA). In terms of domain architecture, Galectin spans 164-294 (YDLPLPGGVK…DIDLTSASYA (131 aa)). 227–233 (WGKEERQ) provides a ligand contact to a beta-D-galactoside. Positions 272–287 (KNLPEISKLGISGDID) match the Nuclear export signal motif.

In terms of assembly, probably forms homo- or heterodimers. Interacts with DMBT1. Interacts with CD6 and ALCAM. Forms a complex with the ITGA3, ITGB1 and CSPG4. Interacts with LGALS3BP, LYPD3, ZFTRAF1 and UACA. Interacts with TRIM16; this interaction mediates autophagy of damage endomembranes. Interacts with cargo receptor TMED10; the interaction mediates the translocation from the cytoplasm into the ERGIC (endoplasmic reticulum-Golgi intermediate compartment) and thereby secretion. Interacts with and inhibits by binding NCR3/NKp30. In terms of processing, the degree of phosphorylation is higher in the cytoplasmic form than in the nuclear form. In protein isolated from a canine kidney cell line, 90% of the phosphate was on Ser-6 and 10% was on Ser-12.

It is found in the cytoplasm. It localises to the nucleus. Its subcellular location is the secreted. Its function is as follows. Galactose-specific lectin which binds IgE. May mediate with the alpha-3, beta-1 integrin the stimulation by CSPG4 of endothelial cells migration. Together with DMBT1, required for terminal differentiation of columnar epithelial cells during early embryogenesis. In the nucleus: acts as a pre-mRNA splicing factor. Involved in acute inflammatory responses including neutrophil activation and adhesion, chemoattraction of monocytes macrophages, opsonization of apoptotic neutrophils, and activation of mast cells. Together with TRIM16, coordinates the recognition of membrane damage with mobilization of the core autophagy regulators ATG16L1 and BECN1 in response to damaged endomembranes. When secreted, interacts with NK cell-activating receptor NCR3/NKp30 acting as an inhibitory ligand which antagonizes NK cell attack. In Canis lupus familiaris (Dog), this protein is Galectin-3 (LGALS3).